Reading from the N-terminus, the 1432-residue chain is Superkiller protein 3 (1432 aa).

TPR repeat units follow at residues 4–37 (IKQL…DPDN) and 47–80 (ALSS…VPDN). A disordered region spans residues 339-397 (SANKPPEGHKKTEKETDIKDVDETNEDEVKDRVEDEVKDRVEDEVKDQDEEAKEDEEED). A compositionally biased stretch (basic and acidic residues) spans 344–381 (PEGHKKTEKETDIKDVDETNEDEVKDRVEDEVKDRVED). Residues 382-397 (EVKDQDEEAKEDEEED) show a composition bias toward acidic residues. TPR repeat units lie at residues 425–458 (ILAH…IAYN), 471–507 (REFS…DFSN), 508–541 (IQAK…SPNN), 627–661 (APGF…DAGD), 702–735 (NWPF…DPND), 736–769 (VESW…RPSH), 945–985 (ASYW…QSNT), 987–1018 (ETWI…EPKA), and 1226–1259 (ISNH…SKDS).

It belongs to the SKI3 family. As to quaternary structure, component of the SKI complex composed of at least SKI2, SKI3 and SKI8. The SKI complex interacts with SKI7, which makes the link between the SKI complex and the exosome in order to perform mRNA degradation.

The protein localises to the cytoplasm. It localises to the nucleus. In terms of biological role, component of the SKI complex involved in 3'-mRNA degradation pathway. Represses dsRNA virus propagation by specifically blocking translation of viral mRNAs, perhaps recognizing the absence of CAP or poly(A). Essential for cell growth only in the presence of M1 replicon. This Saccharomyces cerevisiae (strain ATCC 204508 / S288c) (Baker's yeast) protein is Superkiller protein 3 (SKI3).